A 760-amino-acid chain; its full sequence is Sphingosine kinase B (760 aa).

The tract at residues 1-108 (MENNNNEPAE…NNNNNEPVTS (108 aa)) is disordered. A compositionally biased stretch (basic and acidic residues) spans 12 to 39 (VQEKGPKLKNDIDLNDQFKDEKEKKEEI). Positions 40-106 (SSSSIENKNN…NNNNNNNEPV (67 aa)) are enriched in low complexity. Positions 247–383 (PKNRKIRILI…LDVCIVQQPT (137 aa)) constitute a DAGKc domain. ATP contacts are provided by residues 257 to 259 (NPK) and Thr-288. Substrate is bound at residue 313-316 (SGDG). Asp-315 serves as the catalytic Proton donor/acceptor. ATP is bound by residues Glu-320 and 345-347 (GTG). Residues 394 to 438 (TVTTTTTTTSPTSASPTITSANNNNNNNNNNNNNNNNNNNNNNNN) form a disordered region. Substrate is bound at residue Asp-461. 2 residues coordinate ATP: Arg-468 and Arg-474. Residues 535-605 (DNDNNNKNKN…SSPRSDINMS (71 aa)) form a disordered region. The segment covering 549–597 (EINSTTSNNNNNNNTTTTSTSSSTSTSTSTSSLTATTTTAKSTNSLSSS) has biased composition (low complexity). 734-736 (DGE) contacts ATP.

The catalysed reaction is a sphingoid base + ATP = a sphingoid 1-phosphate + ADP + H(+). Its activity is regulated as follows. Inhibited by N,N,-dimethylsphingosine. Functionally, catalyzes the phosphorylation of sphingosine to form sphingosine-1-phosphate (S1P), which probably acts intracellularly as a second messenger perhaps by promoting cell proliferation. The polypeptide is Sphingosine kinase B (sgkB) (Dictyostelium discoideum (Social amoeba)).